A 102-amino-acid polypeptide reads, in one-letter code: Small ribosomal subunit protein uS10 (102 aa).

This sequence belongs to the universal ribosomal protein uS10 family. Part of the 30S ribosomal subunit.

Involved in the binding of tRNA to the ribosomes. The protein is Small ribosomal subunit protein uS10 of Chloroflexus aurantiacus (strain ATCC 29366 / DSM 635 / J-10-fl).